A 1863-amino-acid chain; its full sequence is E3 ubiquitin-protein ligase ubr3 (1863 aa).

A UBR-type zinc finger spans residues 80–151 (TLCGLVWTAN…ESGFCNRHRL (72 aa)). 3 disordered regions span residues 302-330 (LDDSSKEEDQDGLQGVGQRKRVKLSSSTK), 970-995 (PEVERKRERERERETPPSTSSESATF), and 1128-1152 (IPPKKISPGDKKSMDKEERRQRARE). 2 stretches are compositionally biased toward basic and acidic residues: residues 971-984 (EVERKRERERERET) and 1134-1152 (SPGDKKSMDKEERRQRARE). The RING-type; degenerate zinc finger occupies 1270–1328 (DSSCLQSVSIGWDGGVYVQTCGHTLHIDCHKSYMESLRNDQVLQGISVDKGEFTCPLCR).

The protein belongs to the E3 ubiquitin-protein ligase UBR1-like family.

The catalysed reaction is S-ubiquitinyl-[E2 ubiquitin-conjugating enzyme]-L-cysteine + [acceptor protein]-L-lysine = [E2 ubiquitin-conjugating enzyme]-L-cysteine + N(6)-ubiquitinyl-[acceptor protein]-L-lysine.. Its pathway is protein modification; protein ubiquitination. E3 ubiquitin-protein ligase which is a component of the N-end rule pathway. Recognizes and binds to proteins bearing specific N-terminal residues, leading to their ubiquitination and subsequent degradation. Positively regulates hedgehog/shh-signaling pathways that function in eye development, neuronal specification and somite development. Activation of shh up-regulates transcription of ubr3, which in turn promotes hedgehog/shh signaling possibly by controlling negative regulators such as Kif7. The polypeptide is E3 ubiquitin-protein ligase ubr3 (Danio rerio (Zebrafish)).